The chain runs to 192 residues: MAREREGRRRDEREERDTEFVDRLVHINRVAKVVKGGRRFGFAALVVVGDQKGRVGFGHGKAREVPEAIRKATEAAKRGLIRVALREGRTLHHDVAGRHGSGKVILRAAPQGTGIIAGGPMRAVFESVGMQDVVAKSLGSSNPYNLIRATFDALKREDSPRAVAARRGLKVSALQARRRDAEPGSADSADAA.

The 64-residue stretch at 20–83 folds into the S5 DRBM domain; it reads FVDRLVHINR…EAAKRGLIRV (64 aa). Residues 165-192 form a disordered region; that stretch reads ARRGLKVSALQARRRDAEPGSADSADAA.

It belongs to the universal ribosomal protein uS5 family. Part of the 30S ribosomal subunit. Contacts proteins S4 and S8.

With S4 and S12 plays an important role in translational accuracy. In terms of biological role, located at the back of the 30S subunit body where it stabilizes the conformation of the head with respect to the body. This chain is Small ribosomal subunit protein uS5, found in Methylobacterium sp. (strain 4-46).